The following is a 1368-amino-acid chain: MAP3K epsilon protein kinase 1 (1368 aa).

Positions 20-274 (YMLGDEIGKG…AKTLLSHPWI (255 aa)) constitute a Protein kinase domain. HEAT repeat units lie at residues 25-62 (EIGKGAYGRVYKGLDLENGDFVAIKQVSLENIVQEDLN) and 86-125 (SKTKTHLHIILEYVENGSLANIIKPNKFGPFPESLVAVYI). ATP is bound by residues 26 to 34 (IGKGAYGRV) and lysine 49. The active-site Proton acceptor is the aspartate 144. The stretch at 218 to 256 (PYYDLQPMPALFRIVQDDNPPIPDSLSPDITDFLRQCFK) is one HEAT 3 repeat. Disordered regions lie at residues 296–415 (EATA…KNTS) and 430–507 (QTSH…PVAD). Positions 351–364 (LGEEGTDNSEDDIM) are enriched in acidic residues. Composition is skewed to basic and acidic residues over residues 388-399 (SDFHGKSERGET) and 470-486 (SLHDLFHPLDKVSEGKP). The span at 488 to 502 (EASTSMPTSNVNQGD) shows a compositional bias: polar residues. HEAT repeat units lie at residues 533 to 571 (SNDGGDLFRLMMGVLKDDVIDIDGLVFDEKVPAENLFPL), 628 to 653 (IPKSRVICAVLQLINEIIKDNTDFQE), 654 to 695 (NACL…SSPL), 699 to 737 (MFIACRGIPVLVGFLEADYAKYREMVHLAIDGMWQVFKL), and 750 to 788 (AAKNGILLRLINTLYSLNEATRLASISGGLDGQAPRVRS). The segment at 777–883 (GGLDGQAPRV…ISLSANRTST (107 aa)) is disordered. Positions 791–808 (LDPNNPIFGQNETSSLSM) are enriched in polar residues. Composition is skewed to basic and acidic residues over residues 813-826 (DVLKTRHGGGEEPS) and 836-852 (SDVHQPDALHPDGDKPR). HEAT repeat units lie at residues 903–940 (EQVRPLLSLLDKEPPSRHYSGQLDYVKHITGIERHESR), 1025–1063 (ATSSGLLAHMVSTLSADVAREYLEKVADLLLEFARADTT), 1067–1105 (YMCSQSLLSRLFQMFNRVEPPILLKILECTNHLSTDPNC), 1112–1150 (ADAIKHLIPNLELKDGHLVYQIHHEVLSALFNLCKINKR), 1154–1191 (QAAENGIIPHLMLFIMSDSPLKQYALPLLCDMAHASRN), 1196–1234 (LRAHGGLDVYLSLLDDEYWSVIALDSIAVCLAQDNDNRK), 1258–1281 (RHFVHILEPFLKIITKSYRINKTL), 1282–1318 (AVNGLTPLLISRLDHQDAIARLNLLKLIKAVYEHHPR), and 1348–1368 (QVLVKQMATSLLKALHINTIL).

It belongs to the protein kinase superfamily. Ser/Thr protein kinase family. As to quaternary structure, interacts with SGP1. Post-translationally, autophosphorylated. Expressed in both the sporophytic and the gametophytic tissues, especially in dividing cells. Mostly present in flower buds and mature flowers. Also accumulates in embryos, in roots apices, trichomes and ovule integuments.

Its subcellular location is the cytoplasm. It is found in the cytoskeleton. The protein resides in the microtubule organizing center. It localises to the nucleus. The protein localises to the nucleolus. Its subcellular location is the cell membrane. The enzyme catalyses L-seryl-[protein] + ATP = O-phospho-L-seryl-[protein] + ADP + H(+). The catalysed reaction is L-threonyl-[protein] + ATP = O-phospho-L-threonyl-[protein] + ADP + H(+). Serine/threonine-protein kinase involved in the spatial and temporal control system organizing cortical activities in mitotic and postmitotic cells. Required for the normal functioning of the plasma membrane in developing pollen. Involved in the regulation of cell expansion, cell elongation, and embryo development. This Arabidopsis thaliana (Mouse-ear cress) protein is MAP3K epsilon protein kinase 1.